A 189-amino-acid chain; its full sequence is Interleukin-23 subunit alpha (189 aa).

A signal peptide spans 1–19 (MLGSTAVMLLLLLPWTAQT).

It belongs to the IL-6 superfamily. In terms of assembly, heterodimer with IL12B; disulfide-linked. The heterodimer is known as interleukin IL-23. Interacts with IL23R; this interaction enables recruitment of IL12RB1.

It localises to the secreted. In terms of biological role, associates with IL12B to form the pro-inflammatory cytokine IL-23 that plays different roles in innate and adaptive immunity. Released by antigen-presenting cells such as dendritic cells or macrophages, binds to a heterodimeric receptor complex composed of IL12RB1 and IL23R to activate JAK2 and TYK2 which then phosphorylate the receptor to form a docking site leading to the phosphorylation of STAT3 and STAT4. This process leads to activation of several pathways including p38 MAPK or NF-kappa-B and promotes the production of pro-inflammatory cytokines such as interleukin-17A/IL17A. In turn, participates in the early and effective intracellular bacterial clearance. Promotes the expansion and survival of T-helper 17 cells, a CD4-positive helper T-cell subset that produces IL-17, as well as other IL-17-producing cells. The polypeptide is Interleukin-23 subunit alpha (IL23A) (Cavia porcellus (Guinea pig)).